The chain runs to 177 residues: Parathyroid hormone-related protein (177 aa).

Positions 1–24 (MLRRLVQQWGVAVFLLSYSVPSCG) are cleaved as a signal peptide. The propeptide occupies 25–34 (RSVEELGRRL). Positions 57 to 68 (RFFLHHLIAEIH) are important for receptor binding. The segment at 74-177 (ATSEVSPNSK…TSLELNLRRH (104 aa)) is disordered. Polar residues predominate over residues 76–90 (SEVSPNSKPAPNTKN). A Nuclear localization signal motif is present at residues 108–129 (TNKVETYKEQPLKTPGKKKKGK). Residues 109 to 118 (NKVETYKEQP) show a composition bias toward basic and acidic residues. Residues 122–132 (PGKKKKGKPGK) show a composition bias toward basic residues.

Belongs to the parathyroid hormone family. PTHrP interacts with PTH1R (via N-terminal extracellular domain). There are several secretory forms, including osteostatin, arising from endoproteolytic cleavage of the initial translation product. Each of these secretory forms is believed to have one or more of its own receptors that mediates the normal paracrine, autocrine and endocrine actions.

It localises to the secreted. Its subcellular location is the cytoplasm. The protein resides in the nucleus. Its function is as follows. Neuroendocrine peptide which is a critical regulator of cellular and organ growth, development, migration, differentiation and survival and of epithelial calcium ion transport. Acts by binding to its receptor, PTH1R, activating G protein-coupled receptor signaling. Regulates endochondral bone development and epithelial-mesenchymal interactions during the formation of the mammary glands and teeth. Required for skeletal homeostasis. Promotes mammary mesenchyme differentiation and bud outgrowth by modulating mesenchymal cell responsiveness to BMPs. Up-regulates BMPR1A expression in the mammary mesenchyme and this increases the sensitivity of these cells to BMPs and allows them to respond to BMP4 in a paracrine and/or autocrine fashion. BMP4 signaling in the mesenchyme, in turn, triggers epithelial outgrowth and augments MSX2 expression, which causes the mammary mesenchyme to inhibit hair follicle formation within the nipple sheath. In terms of biological role, potent inhibitor of osteoclastic bone resorption. The polypeptide is Parathyroid hormone-related protein (PTHLH) (Canis lupus familiaris (Dog)).